Here is a 463-residue protein sequence, read N- to C-terminus: uncharacterized protein (463 aa).

The region spanning 13-81 is the HTH gntR-type domain; sequence IPLYQQLYRY…PRSGWFADYH (69 aa). The H-T-H motif DNA-binding region spans 41-60; sequence KRLLANQLSISQTTVERAYE. N6-(pyridoxal phosphate)lysine is present on K308.

In the C-terminal section; belongs to the class-I pyridoxal-phosphate-dependent aminotransferase family. Requires pyridoxal 5'-phosphate as cofactor.

This is an uncharacterized protein from Bacillus subtilis (strain 168).